Here is a 172-residue protein sequence, read N- to C-terminus: Shikimate kinase (172 aa).

ATP is bound at residue 11–16 (GAGKST). Ser-15 contributes to the Mg(2+) binding site. Substrate is bound by residues Asp-33, Arg-57, and Gly-79. Residue Arg-117 participates in ATP binding. Arg-136 serves as a coordination point for substrate. Arg-153 contributes to the ATP binding site.

The protein belongs to the shikimate kinase family. In terms of assembly, monomer. It depends on Mg(2+) as a cofactor.

It localises to the cytoplasm. It catalyses the reaction shikimate + ATP = 3-phosphoshikimate + ADP + H(+). It participates in metabolic intermediate biosynthesis; chorismate biosynthesis; chorismate from D-erythrose 4-phosphate and phosphoenolpyruvate: step 5/7. Catalyzes the specific phosphorylation of the 3-hydroxyl group of shikimic acid using ATP as a cosubstrate. This chain is Shikimate kinase, found in Pseudomonas syringae pv. tomato (strain ATCC BAA-871 / DC3000).